A 263-amino-acid chain; its full sequence is Lens fiber major intrinsic protein (263 aa).

Over 1 to 9 (MWELRSASF) the chain is Cytoplasmic. The chain crosses the membrane as a helical span at residues 10 to 29 (WRAIFAEFFATLFYVFFGLG). At 30-41 (ASLRWAPGPLHV) the chain is on the extracellular side. A helical membrane pass occupies residues 42-59 (LQVALAFGLALAXLVQTV). Over 60-61 (GH) the chain is Cytoplasmic. Residues 62–77 (ISGAHVNPAVTFXFLV) constitute an intramembrane region (discontinuously helical). An NPA 1 motif is present at residues 68-70 (NPA). Residues 78 to 82 (GSQMS) are Cytoplasmic-facing. A helical membrane pass occupies residues 83–106 (LLRAFCYMAAQLLGAVAGAAVLYS). At 107–127 (VTPPAVRGNLALNTLHAGVSV) the chain is on the extracellular side. A helical transmembrane segment spans residues 128–148 (XQATTVEIFLTLQFVLCIFAT). At 149–156 (YDERRNGR) the chain is on the cytoplasmic side. Residues 157-175 (LGSVALAVGFSLTLGHLFG) form a helical membrane-spanning segment. The Extracellular portion of the chain corresponds to 176-178 (MYY). The segment at residues 179–193 (TGAGMNPARSFAPAI) is an intramembrane region (discontinuously helical). The NPA 2 signature appears at 184-186 (NPA). At 194 to 200 (LTRNFTN) the chain is on the extracellular side. A helical membrane pass occupies residues 201–222 (HWVYWVGPIIGGGLGSLLYDFL). The Cytoplasmic portion of the chain corresponds to 223-263 (LFPRLKSVSERLSILKGTRPSDNNGQPEGTGEPVELKTQAL). The segment at 227 to 237 (LKSVSERLSIL) is interaction with CALM. Serine 235 and serine 243 each carry phosphoserine. A disordered region spans residues 238 to 263 (KGTRPSDNNGQPEGTGEPVELKTQAL). Deamidated asparagine; by deterioration occurs at positions 245 and 246.

The protein belongs to the MIP/aquaporin (TC 1.A.8) family. As to quaternary structure, homotetramer; each monomer provides an independent water pore. Two homotetramers on opposing membranes can dimerize, forming a cell-cell junction. Interacts with CALM; the calcium-calmodulin/CALM complex interacts with the cytoplasmic domains of two aquaporins, leading to channel closure. Interacts with BFSP1 (via C-terminus); prevents calcium-dependent inhibition of the water channel activity. Post-translationally, subject to partial proteolytic cleavage in the eye lens core. Partial proteolysis promotes interactions between tetramers from adjoining membranes. Fatty acylated at Met-1 and Lys-238. The acyl modifications, in decreasing order of ion abundance, are: oleoyl (C18:1) &gt; palmitoyl (C16:0) &gt; stearoyl (C18:0) &gt; eicosenoyl (C20:1) &gt; dihomo-gamma-linolenoyl (C20:3) &gt; palmitoleoyl (C16:1) &gt; eicosadienoyl (C20:2). Detected in eye lens (at protein level).

The protein localises to the cell membrane. It is found in the cell junction. It catalyses the reaction H2O(in) = H2O(out). Its activity is regulated as follows. The water channel activity is inhibited by calcium through calmodulin/CALM. Functionally, aquaporins form homotetrameric transmembrane channels, with each monomer independently mediating water transport across the plasma membrane along its osmotic gradient. Specifically expressed in lens fiber cells, this aquaporin is crucial for maintaining lens water homeostasis and transparency. Beyond water permeability, it also acts as a cell-to-cell adhesion molecule, forming thin junctions between lens fiber cells that are essential for maintaining the ordered structure and transparency of the lens. This chain is Lens fiber major intrinsic protein, found in Cavia porcellus (Guinea pig).